The chain runs to 894 residues: ABC-transporter-regulating transcription factor (894 aa).

A DNA-binding region (zn(2)-C6 fungal-type) is located at residues 71–98 (CDMCRKKKIKCDGKMPKCSHCINYRTDC). Residues 159–174 (NTALNSLKSPTNKFNG) show a composition bias toward polar residues. Residues 159 to 219 (NTALNSLKSP…PKESETEVEG (61 aa)) are disordered. Over residues 175 to 189 (SSATSQSQHTTASRH) the composition is skewed to low complexity. A compositionally biased stretch (polar residues) spans 199–210 (SPHTAATSPNSP). Residues 649–669 (CVWLILYYPVSALVTLFANIL) traverse the membrane as a helical segment. The tract at residues 724-797 (AEKESHSKKK…MSNPTRAFAP (74 aa)) is disordered. A compositionally biased stretch (basic and acidic residues) spans 736–750 (AAPDEPQDLRQKTPD). Polar residues-rich tracts occupy residues 751-761 (ENSVPSPSTKR) and 771-792 (LFPSSSYPINLGNTGPDMSNPT).

It is found in the nucleus. Its subcellular location is the membrane. Its function is as follows. Transcription factor that regulates expression of the genes related to resistance to azole compounds. The chain is ABC-transporter-regulating transcription factor from Aspergillus oryzae (strain ATCC 42149 / RIB 40) (Yellow koji mold).